The following is an 870-amino-acid chain: A-kinase anchor protein 2 (870 aa).

2 disordered regions span residues P14–E43 and I103–D165. Residue S122 is modified to Phosphoserine. Residues G133–A151 show a composition bias toward polar residues. A Phosphoserine modification is found at S152. Over residues S152 to C161 the composition is skewed to low complexity. K174 is covalently cross-linked (Glycyl lysine isopeptide (Lys-Gly) (interchain with G-Cter in SUMO1); alternate). A Glycyl lysine isopeptide (Lys-Gly) (interchain with G-Cter in SUMO2); alternate cross-link involves residue K174. Residues E213–L307 are a coiled coil. The tract at residues K233–K324 is disordered. A compositionally biased stretch (basic and acidic residues) spans L259–Q274. Residues Q275–L302 are compositionally biased toward low complexity. Residues A313–K324 show a composition bias toward basic and acidic residues. S347 carries the phosphoserine modification. The tract at residues E409–G436 is disordered. Residues S410–G424 show a composition bias toward low complexity. A phosphoserine mark is found at S472, S476, and S528. The span at F506–P543 shows a compositional bias: polar residues. Disordered regions lie at residues F506–E577 and Q595–G688. Position 537 is a phosphothreonine (T537). The tract at residues L576–Q589 is PKA-RII subunit binding domain. Over residues Q595–S608 the composition is skewed to basic and acidic residues. At S641 the chain carries Phosphoserine. Basic and acidic residues predominate over residues Q644 to G665. Residues K720–S755 are a coiled coil. Phosphoserine occurs at positions 730, 758, 789, and 796. The tract at residues Q740 to N814 is disordered. The segment covering S755 to Y774 has biased composition (polar residues).

It is found in the apical cell membrane. Binds to regulatory subunit (RII) of protein kinase A. May be involved in establishing polarity in signaling systems or in integrating PKA-RII isoforms with downstream effectors to capture, amplify and focus diffuse, trans-cellular signals carried by cAMP. Binds to and modulates the structure of the actin cytoskeleton. The polypeptide is A-kinase anchor protein 2 (Rattus norvegicus (Rat)).